Here is a 347-residue protein sequence, read N- to C-terminus: Protein RecA (347 aa).

65-72 (GPESSGKT) contacts ATP. A disordered region spans residues 325–347 (KLGISDGDVEETEDAPKSLFDEE). A compositionally biased stretch (basic and acidic residues) spans 338 to 347 (DAPKSLFDEE).

The protein belongs to the RecA family.

Its subcellular location is the cytoplasm. Its function is as follows. Can catalyze the hydrolysis of ATP in the presence of single-stranded DNA, the ATP-dependent uptake of single-stranded DNA by duplex DNA, and the ATP-dependent hybridization of homologous single-stranded DNAs. It interacts with LexA causing its activation and leading to its autocatalytic cleavage. This Staphylococcus aureus (strain Mu3 / ATCC 700698) protein is Protein RecA.